The following is a 370-amino-acid chain: Popeye domain-containing 2 (370 aa).

2 helical membrane passes run 51-71 (ALYI…WGWL) and 78-98 (VFIW…HLIF). Positions 275–349 (PSPPGSEGGS…SGEDSTSLIL (75 aa)) are disordered. Residues 283–294 (GSASSPPRGSLG) are compositionally biased toward low complexity. Polar residues-rich tracts occupy residues 307 to 319 (NPGS…QPDQ) and 330 to 347 (QHWS…STSL).

The protein belongs to the popeye family. In terms of tissue distribution, expressed in the heart and, slightly, in skeletal muscle.

Its subcellular location is the membrane. It localises to the cell membrane. The protein resides in the sarcolemma. Important for striated muscle differentiation and cardiac morphogenesis. Is also required for cardiac conduction system development, plays a regulatory function in heart rate dynamics mediated, at least in part, through cAMP-binding. The polypeptide is Popeye domain-containing 2 (Danio rerio (Zebrafish)).